Here is a 508-residue protein sequence, read N- to C-terminus: Anthranilate synthase component 1 (508 aa).

L-tryptophan is bound by residues serine 51 and 283–285 (PYM). Chorismate is bound at residue 323 to 324 (GT). Glutamate 350 serves as a coordination point for Mg(2+). Residues tyrosine 438, arginine 458, 477–479 (GAG), and glycine 479 each bind chorismate. A Mg(2+)-binding site is contributed by glutamate 492.

This sequence belongs to the anthranilate synthase component I family. As to quaternary structure, heterotetramer consisting of two non-identical subunits: a beta subunit (TrpG) and a large alpha subunit (TrpE). Mg(2+) serves as cofactor.

The enzyme catalyses chorismate + L-glutamine = anthranilate + pyruvate + L-glutamate + H(+). The protein operates within amino-acid biosynthesis; L-tryptophan biosynthesis; L-tryptophan from chorismate: step 1/5. Feedback inhibited by tryptophan. In terms of biological role, part of a heterotetrameric complex that catalyzes the two-step biosynthesis of anthranilate, an intermediate in the biosynthesis of L-tryptophan. In the first step, the glutamine-binding beta subunit (TrpG) of anthranilate synthase (AS) provides the glutamine amidotransferase activity which generates ammonia as a substrate that, along with chorismate, is used in the second step, catalyzed by the large alpha subunit of AS (TrpE) to produce anthranilate. In the absence of TrpG, TrpE can synthesize anthranilate directly from chorismate and high concentrations of ammonia. The chain is Anthranilate synthase component 1 (trpE) from Synechocystis sp. (strain ATCC 27184 / PCC 6803 / Kazusa).